Reading from the N-terminus, the 78-residue chain is RNA-binding protein Hfq (78 aa).

Residues 10–70 enclose the Sm domain; sequence DLFLNSVRKQ…ISTIMPSQPV (61 aa).

The protein belongs to the Hfq family. In terms of assembly, homohexamer.

Functionally, RNA chaperone that binds small regulatory RNA (sRNAs) and mRNAs to facilitate mRNA translational regulation in response to envelope stress, environmental stress and changes in metabolite concentrations. Also binds with high specificity to tRNAs. This Brucella abortus (strain S19) protein is RNA-binding protein Hfq.